The sequence spans 461 residues: Fumarate hydratase class II (461 aa).

Residues 97-99 (SGT), 127-130 (HPND), 137-139 (SSN), and T185 each bind substrate. H186 (proton donor/acceptor) is an active-site residue. Residue S316 is part of the active site. Residues S317 and 322–324 (KVN) each bind substrate.

The protein belongs to the class-II fumarase/aspartase family. Fumarase subfamily. Homotetramer.

It is found in the cytoplasm. It carries out the reaction (S)-malate = fumarate + H2O. The protein operates within carbohydrate metabolism; tricarboxylic acid cycle; (S)-malate from fumarate: step 1/1. In terms of biological role, involved in the TCA cycle. Catalyzes the stereospecific interconversion of fumarate to L-malate. The polypeptide is Fumarate hydratase class II (Staphylococcus aureus (strain MSSA476)).